Consider the following 165-residue polypeptide: E3 ubiquitin ligase complex SCF subunit sconC (165 aa).

An interaction with the F-box domain of F-box proteins region spans residues 106-165 (ILAANYLDIKALLDVGCKTVANMIKGKSPEEIRKTFNIQNDFTPEEEDQIRRENEWAEDR).

The protein belongs to the SKP1 family. As to quaternary structure, component of the SCF (SKP1-CUL1-F-box protein) E3 ubiquitin ligase complexes.

It participates in protein modification; protein ubiquitination. Essential component of the SCF (SKP1-CUL1-F-box protein) E3 ubiquitin ligase complexes, which mediate the ubiquitination and subsequent proteasomal degradation of target proteins. Controls sulfur metabolite repression, probably by mediating the inactivation or degradation of the metR transcription factor. This Arthroderma otae (strain ATCC MYA-4605 / CBS 113480) (Microsporum canis) protein is E3 ubiquitin ligase complex SCF subunit sconC (sconC).